The sequence spans 209 residues: Uracil phosphoribosyltransferase (209 aa).

5-phospho-alpha-D-ribose 1-diphosphate-binding positions include Arg-79, Arg-104, and 131-139; that span reads DPMLATGGS. Uracil-binding positions include Ile-194 and 199–201; that span reads GDA. Position 200 (Asp-200) interacts with 5-phospho-alpha-D-ribose 1-diphosphate.

Belongs to the UPRTase family. It depends on Mg(2+) as a cofactor.

It carries out the reaction UMP + diphosphate = 5-phospho-alpha-D-ribose 1-diphosphate + uracil. It functions in the pathway pyrimidine metabolism; UMP biosynthesis via salvage pathway; UMP from uracil: step 1/1. With respect to regulation, allosterically activated by GTP. Functionally, catalyzes the conversion of uracil and 5-phospho-alpha-D-ribose 1-diphosphate (PRPP) to UMP and diphosphate. This Clostridium acetobutylicum (strain ATCC 824 / DSM 792 / JCM 1419 / IAM 19013 / LMG 5710 / NBRC 13948 / NRRL B-527 / VKM B-1787 / 2291 / W) protein is Uracil phosphoribosyltransferase.